Consider the following 316-residue polypeptide: SHC-transforming protein homolog 1 (316 aa).

Residues 16–158 form the PID domain; the sequence is GVSLSATYLG…LIDVLTTAIN (143 aa). The 97-residue stretch at 211–307 folds into the SH2 domain; it reads WYHGNLSRED…ETSLNLIRPV (97 aa). The interval 292–316 is disordered; the sequence is SEGRDRETSLNLIRPVPCPGSDDIE.

Interacts (via PID domain) with daf-2 (via cytoplasmic domain). Interacts with mek-1; the interaction is independent of mek-1 catalytic activity and is constitutive. Interacts (via N-terminus) with mlk-1 (via NPQY motif when phosphorylated on tyrosine residue). Does not interact with jkk-1 or sek-1. Interacts (via SH2 domain) with svh-2. Interacts with svh-4. In terms of tissue distribution, expressed in hypodermis, intestine, head and tail neurons, pharynx, gonads, vulva and body muscles.

It is found in the cytoplasm. The protein resides in the nucleus. Its subcellular location is the cell membrane. Functionally, scaffold protein which plays an important role in the activation of the JNK pathway composed of mlk-1, mek-1 and kgb-1; by bringing together mek-1 and mlk-1, promotes mlk-1-mediated phosphorylation and activation of mek-1 which in turn phosphorylates kgb-1. In addition, negatively modulates the activation of the insulin/IGF-1-like signaling (IIS) probably by inhibiting the insulin receptor daf-2. Positively regulates the activity of the transcription factor daf-16/FOXO by both inhibiting IIS and activating the JNK pathway. Plays a role in maintaining gonadal basement membrane integrity through activation of the JNK pathway components mek-1 and jnk-1. Involved in the response to several environmental stresses including heavy metal ions (Cu(2+) and Cd(2+)), heat, oxidative and protein misfolding (ER) stresses. Plays a role in gonad and germline development following the L1 diapause. Plays a role in life span and egg laying. Plays a role in axon regeneration after injury. The protein is SHC-transforming protein homolog 1 of Caenorhabditis elegans.